Consider the following 142-residue polypeptide: ATP synthase epsilon chain (142 aa).

It belongs to the ATPase epsilon chain family. In terms of assembly, F-type ATPases have 2 components, CF(1) - the catalytic core - and CF(0) - the membrane proton channel. CF(1) has five subunits: alpha(3), beta(3), gamma(1), delta(1), epsilon(1). CF(0) has three main subunits: a, b and c.

The protein resides in the cell inner membrane. Its function is as follows. Produces ATP from ADP in the presence of a proton gradient across the membrane. This is ATP synthase epsilon chain from Shewanella baltica (strain OS155 / ATCC BAA-1091).